A 192-amino-acid polypeptide reads, in one-letter code: Ion-translocating oxidoreductase complex subunit A (192 aa).

A run of 6 helical transmembrane segments spans residues 5 to 25, 39 to 59, 63 to 83, 102 to 122, 134 to 154, and 171 to 191; these read LLLLVGTVLVNNFVLVKFLGL, IGMGLATTFVLTLASVSAYLV, ILTPLGIEYLRTMSFILVIAV, LLGIFLPLITTNCAVLGVALL, IIYGFGAAVGFSLVLILFAAM, and SIAMITAGLMSLAFMGFTGLV.

Belongs to the NqrDE/RnfAE family. The complex is composed of six subunits: RnfA, RnfB, RnfC, RnfD, RnfE and RnfG.

It localises to the cell inner membrane. Part of a membrane-bound complex that couples electron transfer with translocation of ions across the membrane. The polypeptide is Ion-translocating oxidoreductase complex subunit A (Vibrio atlanticus (strain LGP32) (Vibrio splendidus (strain Mel32))).